The sequence spans 347 residues: D-alanine--D-alanine ligase (347 aa).

An ATP-grasp domain is found at 131 to 333; it reads KRVLESAGIA…YPKLIERLVD (203 aa). 161-216 contacts ATP; it reads EEKLAYPVFTKPSNMGSSVGISKSENQEELRQALKLAFRYDSRVLVEQGVNAREIE. Mg(2+) is bound by residues D287, E300, and N302.

The protein belongs to the D-alanine--D-alanine ligase family. The cofactor is Mg(2+). It depends on Mn(2+) as a cofactor.

Its subcellular location is the cytoplasm. The catalysed reaction is 2 D-alanine + ATP = D-alanyl-D-alanine + ADP + phosphate + H(+). It functions in the pathway cell wall biogenesis; peptidoglycan biosynthesis. Functionally, cell wall formation. The polypeptide is D-alanine--D-alanine ligase (Streptococcus pneumoniae serotype 4 (strain ATCC BAA-334 / TIGR4)).